The primary structure comprises 437 residues: Probable inactive DNA (cytosine-5)-methyltransferase DRM1B (437 aa).

UBA domains follow at residues 20–60 (SAPS…LLQL) and 120–164 (EMSE…IYAP). Residues 243-437 (VHRNLPDHAL…LIQLHTTSLC (195 aa)) enclose the SAM-dependent MTase DRM-type domain.

This sequence belongs to the class I-like SAM-binding methyltransferase superfamily. DRM-methyltransferase family.

It is found in the nucleus. In terms of biological role, involved in de novo DNA methylation. Involved in RNA-directed DNA methylation (RdDM). The sequence is that of Probable inactive DNA (cytosine-5)-methyltransferase DRM1B from Oryza sativa subsp. japonica (Rice).